The primary structure comprises 330 residues: Uroporphyrinogen decarboxylase (330 aa).

Residues 10-14 (RQAGR), F29, S59, D60, Y137, S192, and H307 contribute to the substrate site.

Belongs to the uroporphyrinogen decarboxylase family. As to quaternary structure, homodimer.

The protein localises to the plastid. The protein resides in the chloroplast. The catalysed reaction is uroporphyrinogen III + 4 H(+) = coproporphyrinogen III + 4 CO2. It functions in the pathway porphyrin-containing compound metabolism; protoporphyrin-IX biosynthesis; coproporphyrinogen-III from 5-aminolevulinate: step 4/4. In terms of biological role, catalyzes the decarboxylation of four acetate groups of uroporphyrinogen-III to yield coproporphyrinogen-III. This chain is Uroporphyrinogen decarboxylase (DCUP), found in Hordeum vulgare (Barley).